The sequence spans 55 residues: Small ribosomal subunit protein bS21 (55 aa).

This sequence belongs to the bacterial ribosomal protein bS21 family.

In Phytoplasma mali (strain AT), this protein is Small ribosomal subunit protein bS21.